We begin with the raw amino-acid sequence, 122 residues long: Flagellar protein FliT (122 aa).

The tract at residues 1-50 (MTSTVEFINRWQRIALLSQSLLELAQRGEWDLLLQQEVSYLQSIETVMEK) is required for homodimerization. A fliD binding region spans residues 60 to 98 (IQDMVAGYIKQTLDNEQLLKGLLQQRLDELSSLIGQSTR).

This sequence belongs to the FliT family. Homodimer. Interacts with FliD and FlhC.

It is found in the cytoplasm. The protein localises to the cytosol. Its function is as follows. Dual-function protein that regulates the transcription of class 2 flagellar operons and that also acts as an export chaperone for the filament-capping protein FliD. As a transcriptional regulator, acts as an anti-FlhDC factor; it directly binds FlhC, thus inhibiting the binding of the FlhC/FlhD complex to class 2 promoters, resulting in decreased expression of class 2 flagellar operons. As a chaperone, effects FliD transition to the membrane by preventing its premature polymerization, and by directing it to the export apparatus. This is Flagellar protein FliT from Salmonella gallinarum (strain 287/91 / NCTC 13346).